A 160-amino-acid chain; its full sequence is MRDEDFCCAVCLDFFVEPCIIECGHSYCRFCIESHLNINEKCPLCRAHTGNPIRNRQLESLTMSYVSSRNISTEYYERMKSYQKKLLLQNRALVIIWTELNKRPGHSTELCNLVRNVQDEELKSEIMWQVKQQVGVGLEHTGDLQEENVTIRLKNSSSQQ.

An RING-type zinc finger spans residues 8 to 46; that stretch reads CAVCLDFFVEPCIIECGHSYCRFCIESHLNINEKCPLCR.

This is an uncharacterized protein from Caenorhabditis elegans.